Reading from the N-terminus, the 599-residue chain is Elongation factor 4 (599 aa).

Positions 2–184 constitute a tr-type G domain; the sequence is NHIRNFSIIA…RLVRDIPAPE (183 aa). Residues 14–19 and 131–134 each bind GTP; these read DHGKST and NKID.

The protein belongs to the TRAFAC class translation factor GTPase superfamily. Classic translation factor GTPase family. LepA subfamily.

The protein localises to the cell inner membrane. It carries out the reaction GTP + H2O = GDP + phosphate + H(+). In terms of biological role, required for accurate and efficient protein synthesis under certain stress conditions. May act as a fidelity factor of the translation reaction, by catalyzing a one-codon backward translocation of tRNAs on improperly translocated ribosomes. Back-translocation proceeds from a post-translocation (POST) complex to a pre-translocation (PRE) complex, thus giving elongation factor G a second chance to translocate the tRNAs correctly. Binds to ribosomes in a GTP-dependent manner. In Yersinia pestis (strain Pestoides F), this protein is Elongation factor 4.